The following is a 286-amino-acid chain: Transcription factor MafA (286 aa).

2 positions are modified to phosphoserine: serine 14 and serine 49. The span at serine 51–proline 85 shows a compositional bias: low complexity. A disordered region spans residues serine 51–glycine 87. Phosphothreonine occurs at positions 53 and 57. Serine 61 and serine 65 each carry phosphoserine. Threonine 113 is modified (phosphothreonine). Positions histidine 126–arginine 167 are disordered. Basic residues predominate over residues alanine 152–leucine 166. Residues arginine 199 to arginine 224 form a basic motif region. The 64-residue stretch at arginine 199–leucine 262 folds into the bZIP domain. Residues leucine 227–leucine 248 are leucine-zipper. A disordered region spans residues arginine 265–methionine 286. Serine 272 is modified (phosphoserine). Residues proline 277–methionine 286 are compositionally biased toward low complexity.

The protein belongs to the bZIP family. Maf subfamily. As to quaternary structure, forms homodimers or heterodimers. May interact (via leucine-zipper domain) with MAFB. May interact with FOS and JUN. Interacts with PCAF; this interaction impairs MAFA ubiquitination.

The protein resides in the nucleus. In terms of biological role, transcription factor involved in transcription regulation during lens development, including that of crystallin and filensin/BFSP1 genes. Binds to CRE-type MARE 5'-TGCTGACGTCAGCA-3' and TRE-type MARE 5'-TGCTGACTCAGCA-3' DNA sequences. In Gallus gallus (Chicken), this protein is Transcription factor MafA (MAFA).